The following is a 258-amino-acid chain: Apolipoprotein E (258 aa).

An N-terminal signal peptide occupies residues 1–19 (MRVWTVLLGAVLLLAACQA). Repeat copies occupy residues 112–133 (VDMEEAKTRVQQYLGEARQVAG), 134–155 (QNLEDVRSRVGTYLRKLRKRLA), and 156–173 (KDTEELRRKLEAYSKEAT). The 3 X 22 AA approximate tandem repeats stretch occupies residues 112-173 (VDMEEAKTRV…KLEAYSKEAT (62 aa)).

This sequence belongs to the apolipoprotein A1/A4/E family. In terms of assembly, homotetramer.

The protein localises to the secreted. Its subcellular location is the extracellular space. The protein resides in the extracellular matrix. Its function is as follows. APOE is an apolipoprotein, a protein associating with lipid particles, that mainly functions in lipoprotein-mediated lipid transport between organs via the plasma and interstitial fluids. APOE is a core component of plasma lipoproteins and is involved in their production, conversion and clearance. Apolipoproteins are amphipathic molecules that interact both with lipids of the lipoprotein particle core and the aqueous environment of the plasma. The protein is Apolipoprotein E (APOE) of Alligator mississippiensis (American alligator).